The primary structure comprises 310 residues: HTH-type transcriptional regulator PunR (310 aa).

Residues 2–59 (WSEYSLEVVDAVARNGSFSAAAQELHRVPSAVSYTVRQLEEWLAVPLFERRHRDVELT) enclose the HTH lysR-type domain. A DNA-binding region (H-T-H motif) is located at residues 19–38 (FSAAAQELHRVPSAVSYTVR).

It belongs to the LysR transcriptional regulatory family.

The protein resides in the cytoplasm. Its function is as follows. Transcriptional regulator that activates the expression of punC, which encodes a purine nucleoside transporter. This Escherichia coli O157:H7 protein is HTH-type transcriptional regulator PunR.